The primary structure comprises 378 residues: MDSAVSDPHNGSAEAGTPANGTTRPPSTPEGIALAYGSLLLMALLPIFFGALRSVRCARGKSSSDMPETITSRDAARFPIIASCTLLGLYLFFKIFSQEYINLLLSMYFFVLGILALSHTISPFMNKFFPANFPNRQYQLLFTQGSGENKEEIINYEFDTKDLVCLGLSSVVGVWYLLRKHWIANNLFGLAFSLNGVELLHLNNVSTGCILLGGLFIYDIFWVFGTNVMVTVAKSFEAPIKLVFPQDLLEKGLEADNFAMLGLGDIVIPGIFIALLLRFDISLKKNTHTYFYTSFAAYIFGLGLTIFIMHIFKHAQPALLYLVPACIGFPVLVALAKGEVAEMFSYEESNPKDPAAETESKEESTEASASKRLEKKEK.

The disordered stretch occupies residues 1–27 (MDSAVSDPHNGSAEAGTPANGTTRPPS). Topologically, residues 1 to 31 (MDSAVSDPHNGSAEAGTPANGTTRPPSTPEG) are lumenal. N-linked (GlcNAc...) asparagine glycans are attached at residues Asn10 and Asn20. The chain crosses the membrane as a helical span at residues 32-52 (IALAYGSLLLMALLPIFFGAL). Over 53 to 77 (RSVRCARGKSSSDMPETITSRDAAR) the chain is Cytoplasmic. Residues 78 to 98 (FPIIASCTLLGLYLFFKIFSQ) traverse the membrane as a helical segment. Topologically, residues 99–100 (EY) are lumenal. Residues 101–121 (INLLLSMYFFVLGILALSHTI) form a helical membrane-spanning segment. The Cytoplasmic segment spans residues 122–157 (SPFMNKFFPANFPNRQYQLLFTQGSGENKEEIINYE). A helical transmembrane segment spans residues 158 to 178 (FDTKDLVCLGLSSVVGVWYLL). Residues 179–181 (RKH) are Lumenal-facing. The helical transmembrane segment at 182–202 (WIANNLFGLAFSLNGVELLHL) threads the bilayer. Over 203-209 (NNVSTGC) the chain is Cytoplasmic. A helical transmembrane segment spans residues 210-230 (ILLGGLFIYDIFWVFGTNVMV). Asp219 is an active-site residue. The Lumenal portion of the chain corresponds to 231 to 256 (TVAKSFEAPIKLVFPQDLLEKGLEAD). A helical transmembrane segment spans residues 257–277 (NFAMLGLGDIVIPGIFIALLL). The active site involves Asp265. Over 278–290 (RFDISLKKNTHTY) the chain is Cytoplasmic. Residues 291-311 (FYTSFAAYIFGLGLTIFIMHI) traverse the membrane as a helical segment. The Lumenal portion of the chain corresponds to 312-314 (FKH). The chain crosses the membrane as a helical span at residues 315–335 (AQPALLYLVPACIGFPVLVAL). A PAL motif is present at residues 317-319 (PAL). Over 336 to 378 (AKGEVAEMFSYEESNPKDPAAETESKEESTEASASKRLEKKEK) the chain is Cytoplasmic. The disordered stretch occupies residues 346–378 (YEESNPKDPAAETESKEESTEASASKRLEKKEK). Residues 349–378 (SNPKDPAAETESKEESTEASASKRLEKKEK) are compositionally biased toward basic and acidic residues. The residue at position 368 (Ser368) is a Phosphoserine.

It belongs to the peptidase A22B family. Monomer. Homodimer. Interacts with RNF139. Interacts with DERL1 and XBP1 isoform 1. Widely expressed with highest levels in liver and kidney. In the brain, expressed predominantly in hippocampus, amygdala, piriform cortex, choroid plexus and arcuate nucleus of the hypothalamic area. Isoform 1 is more strongly expressed than isoform 4 in most tissues except brain and skeletal muscle where isoform 4 is the dominant isoform and in testis where isoform 1 and isoform 4 are expressed at similar levels. In the brain, isoform 4 is not detected in the choroid plexus.

It localises to the endoplasmic reticulum membrane. The protein localises to the membrane. The protein resides in the cell membrane. Catalyzes intramembrane proteolysis of signal peptides that have been removed from precursors of secretory and membrane proteins, resulting in the release of the fragment from the ER membrane into the cytoplasm. Required to generate lymphocyte cell surface (HLA-E) epitopes derived from MHC class I signal peptides. Involved in the intramembrane cleavage of the integral membrane protein PSEN1. Cleaves the integral membrane protein XBP1 isoform 1 in a DERL1/RNF139-dependent manner. May play a role in graft rejection. This Mus musculus (Mouse) protein is Signal peptide peptidase.